Here is a 114-residue protein sequence, read N- to C-terminus: MNITLTKRQQEFLLLNGWLQLQCGHAERACILLDALLTLNPEHLAGRRCRLVALLNNNQGERAEKEAQWLISHDPLQAGNWLCLSRAQQLNGDLDKARHAYQHYLELKDHNESP.

In terms of assembly, binds to YscX.

The protein localises to the cytoplasm. Required for Yop secretion. Functions probably as a chaperone which stabilizes YscX within the cell, before its secretion. This chain is Chaperone protein YscY (yscY), found in Yersinia enterocolitica.